A 585-amino-acid polypeptide reads, in one-letter code: Cysteine/serine-rich nuclear protein 3 (585 aa).

Disordered stretches follow at residues 1–52 (MSGI…TPSS) and 335–395 (ELDC…GFVE). Low complexity predominate over residues 30–40 (SSESADSGDSV). Polar residues predominate over residues 41-52 (NPSTSSHFTPSS). A compositionally biased stretch (acidic residues) spans 335–349 (ELDCQGEEEEEEEDG). The segment covering 351–366 (SFCSGVTDSSTQSLAP) has biased composition (polar residues). Acidic residues predominate over residues 368 to 389 (ESDEEEEEEEEEEEEEDDDDDK).

The protein belongs to the AXUD1 family.

Its subcellular location is the nucleus. In terms of biological role, binds to the consensus sequence 5'-AGAGTG-3' and has transcriptional activator activity. Plays a role in apoptosis. The polypeptide is Cysteine/serine-rich nuclear protein 3 (CSRNP3) (Homo sapiens (Human)).